The sequence spans 139 residues: Nucleoside diphosphate kinase (139 aa).

Lys11, Phe59, Arg87, Thr93, Arg104, and Asn114 together coordinate ATP. His117 (pros-phosphohistidine intermediate) is an active-site residue.

It belongs to the NDK family. Homotetramer. Requires Mg(2+) as cofactor.

The protein resides in the cytoplasm. It carries out the reaction a 2'-deoxyribonucleoside 5'-diphosphate + ATP = a 2'-deoxyribonucleoside 5'-triphosphate + ADP. The enzyme catalyses a ribonucleoside 5'-diphosphate + ATP = a ribonucleoside 5'-triphosphate + ADP. Functionally, major role in the synthesis of nucleoside triphosphates other than ATP. The ATP gamma phosphate is transferred to the NDP beta phosphate via a ping-pong mechanism, using a phosphorylated active-site intermediate. This chain is Nucleoside diphosphate kinase, found in Coxiella burnetii (strain CbuK_Q154) (Coxiella burnetii (strain Q154)).